The following is a 706-amino-acid chain: ATP-dependent zinc metalloprotease FtsH (706 aa).

The span at 1-17 (MAKNSLKPSNPYNSEPE) shows a compositional bias: polar residues. A disordered region spans residues 1 to 20 (MAKNSLKPSNPYNSEPETPQ). The Cytoplasmic segment spans residues 1–24 (MAKNSLKPSNPYNSEPETPQPRPK). A helical transmembrane segment spans residues 25–45 (LPMIYYVVVIALLIGLQLAFF). Residues 46–142 (WSGSSREIPY…RYEGSPGTTW (97 aa)) lie on the Periplasmic side of the membrane. The interval 88–111 (GLPKQEEGNDTTRKLLPGAKTPEN) is disordered. A compositionally biased stretch (basic and acidic residues) spans 91-100 (KQEEGNDTTR). Residues 143–163 (ISELIQWVLPFALLFGLYFFI) traverse the membrane as a helical segment. At 164 to 706 (FRRMGAGGPG…LRQSRNVSDN (543 aa)) the chain is on the cytoplasmic side. An ATP-binding site is contributed by 239-246 (GPPGTGKT). His-462 serves as a coordination point for Zn(2+). Residue Glu-463 is part of the active site. 2 residues coordinate Zn(2+): His-466 and Asp-539. Residues 641-681 (RPGGQEEDSGEVDCSKKSAENGMVAHEPETTADAESTEKVG) form a disordered region.

The protein in the central section; belongs to the AAA ATPase family. This sequence in the C-terminal section; belongs to the peptidase M41 family. Homohexamer. The cofactor is Zn(2+).

Its subcellular location is the cell inner membrane. Acts as a processive, ATP-dependent zinc metallopeptidase for both cytoplasmic and membrane proteins. Plays a role in the quality control of integral membrane proteins. This is ATP-dependent zinc metalloprotease FtsH from Chlorobium luteolum (strain DSM 273 / BCRC 81028 / 2530) (Pelodictyon luteolum).